Reading from the N-terminus, the 565-residue chain is 2-isopropylmalate synthase (565 aa).

Residues 37–312 (PRWCSVDLRD…DPMIDLSDID (276 aa)) enclose the Pyruvate carboxyltransferase domain. 4 residues coordinate Mg(2+): Asp46, His251, His253, and Asn287. The regulatory domain stretch occupies residues 446–565 (EGGDPAASLE…SAVNRASRES (120 aa)).

Belongs to the alpha-IPM synthase/homocitrate synthase family. LeuA type 2 subfamily. Homodimer. The cofactor is Mg(2+).

The protein localises to the cytoplasm. The enzyme catalyses 3-methyl-2-oxobutanoate + acetyl-CoA + H2O = (2S)-2-isopropylmalate + CoA + H(+). It participates in amino-acid biosynthesis; L-leucine biosynthesis; L-leucine from 3-methyl-2-oxobutanoate: step 1/4. Catalyzes the condensation of the acetyl group of acetyl-CoA with 3-methyl-2-oxobutanoate (2-ketoisovalerate) to form 3-carboxy-3-hydroxy-4-methylpentanoate (2-isopropylmalate). The polypeptide is 2-isopropylmalate synthase (Parafrankia sp. (strain EAN1pec)).